The following is a 263-amino-acid chain: Exosome complex component Rrp4 (263 aa).

An S1 motif domain is found at 51–127; that stretch reads GKYIPSRKDF…KAMKVELSMR (77 aa). In terms of domain architecture, KH spans 135–196; sequence SKGRIIEVVP…DRLTTAIEMI (62 aa). Residues 213 to 263 form a disordered region; that stretch reads LRGEPEGTEGSDEEQLVDEEVAGVSLEDDDVTEETSRKVDVLLDNDTDETN. The segment covering 218-245 has biased composition (acidic residues); it reads EGTEGSDEEQLVDEEVAGVSLEDDDVTE.

Belongs to the RRP4 family. In terms of assembly, component of the archaeal exosome complex. Forms a trimer of Rrp4 and/or Csl4 subunits. The trimer associates with a hexameric ring-like arrangement composed of 3 Rrp41-Rrp42 heterodimers.

The protein localises to the cytoplasm. Non-catalytic component of the exosome, which is a complex involved in RNA degradation. Increases the RNA binding and the efficiency of RNA degradation. Confers strong poly(A) specificity to the exosome. In Methanococcoides burtonii (strain DSM 6242 / NBRC 107633 / OCM 468 / ACE-M), this protein is Exosome complex component Rrp4.